Here is a 295-residue protein sequence, read N- to C-terminus: Ethanolamine ammonia-lyase small subunit (295 aa).

Adenosylcob(III)alamin-binding residues include V207, E228, and C258.

Belongs to the EutC family. The basic unit is a heterodimer which dimerizes to form tetramers. The heterotetramers trimerize; 6 large subunits form a core ring with 6 small subunits projecting outwards. Adenosylcob(III)alamin serves as cofactor.

It is found in the bacterial microcompartment. It catalyses the reaction ethanolamine = acetaldehyde + NH4(+). It participates in amine and polyamine degradation; ethanolamine degradation. In terms of biological role, catalyzes the deamination of various vicinal amino-alcohols to oxo compounds. Allows this organism to utilize ethanolamine as the sole source of nitrogen and carbon in the presence of external vitamin B12. The chain is Ethanolamine ammonia-lyase small subunit from Escherichia coli O157:H7.